Consider the following 534-residue polypeptide: Cytochrome c oxidase subunit 1 (534 aa).

The helical transmembrane segment at 16–36 (VLYFMLAIFSGMAGTAMSLII) threads the bilayer. Ca(2+) contacts are provided by E39, A42, and G44. A run of 6 helical transmembrane segments spans residues 57–77 (VLVV…ALIG), 101–121 (IAFW…LVES), 147–167 (AIFA…NFIV), 182–202 (LPLF…SLPV), 235–255 (LFYF…FGII), and 267–287 (VFGE…GFLV). H62 lines the Fe(II)-heme a pocket. H241 lines the Cu cation pocket. Positions 241–245 (HPEVY) form a cross-link, 1'-histidyl-3'-tyrosine (His-Tyr). Residue Y245 coordinates O2. Cu cation contacts are provided by H290 and H291. 2 helical membrane passes run 310–330 (MIIA…IYGG) and 338–358 (MLYA…GVAL). Mg(2+) is bound by residues H368 and D369. 2 consecutive transmembrane segments (helical) span residues 372 to 392 (YVVG…LFAG) and 414 to 434 (FWLI…LGIN). Residue H376 coordinates heme a3. H378 is a binding site for Fe(II)-heme a. A Ca(2+)-binding site is contributed by P441. The chain crosses the membrane as a helical span at residues 452–472 (YVASIGSFIATLSLFLFIYIL).

Belongs to the heme-copper respiratory oxidase family. Component of the cytochrome c oxidase (complex IV, CIV), a multisubunit enzyme composed of a catalytic core of 3 subunits and several supernumerary subunits. The complex exists as a monomer or a dimer and forms supercomplexes (SCs) in the inner mitochondrial membrane with ubiquinol-cytochrome c oxidoreductase (cytochrome b-c1 complex, complex III, CIII). Heme is required as a cofactor. Requires Cu cation as cofactor.

It is found in the mitochondrion inner membrane. The catalysed reaction is 4 Fe(II)-[cytochrome c] + O2 + 8 H(+)(in) = 4 Fe(III)-[cytochrome c] + 2 H2O + 4 H(+)(out). Its pathway is energy metabolism; oxidative phosphorylation. Component of the cytochrome c oxidase, the last enzyme in the mitochondrial electron transport chain which drives oxidative phosphorylation. The respiratory chain contains 3 multisubunit complexes succinate dehydrogenase (complex II, CII), ubiquinol-cytochrome c oxidoreductase (cytochrome b-c1 complex, complex III, CIII) and cytochrome c oxidase (complex IV, CIV), that cooperate to transfer electrons derived from NADH and succinate to molecular oxygen, creating an electrochemical gradient over the inner membrane that drives transmembrane transport and the ATP synthase. Cytochrome c oxidase is the component of the respiratory chain that catalyzes the reduction of oxygen to water. Electrons originating from reduced cytochrome c in the intermembrane space (IMS) are transferred via the dinuclear copper A center (CU(A)) of subunit 2 and heme A of subunit 1 to the active site in subunit 1, a binuclear center (BNC) formed by heme A3 and copper B (CU(B)). The BNC reduces molecular oxygen to 2 water molecules using 4 electrons from cytochrome c in the IMS and 4 protons from the mitochondrial matrix. The protein is Cytochrome c oxidase subunit 1 (COXI) of Saccharomyces paradoxus (Yeast).